We begin with the raw amino-acid sequence, 737 residues long: MIISKSFKAPLKFSVKSSTAPVISNHPPMENHPKRQRTTRLAARNLKRKLSHNTDGAPIVTQLIDIDDEPIDLVVAIRRHVEVLNSSFSDPDFDHEAVKEAAADIADLAKIDENVEIIVENGAIPALVRYLESPLVVCGNVPKSCEHKLEKDCALALGLIAAIQPGYQQLIVDAGAIVPTVKLLKRRGECGECMFANAVIRRAADIITNIAHDNPRIKTNIRVEGGIAPLVELLNFPDVKVQRAAAGALRTVSFRNDENKSQIVELNALPTLVLMLQSQDSTVHGEAIGAIGNLVHSSPDIKKEVIRAGALQPVIGLLSSTCLETQREAALLIGQFAAPDSDCKVHIAQRGAITPLIKMLESSDEQVVEMSAFALGRLAQDAHNQAGIAHRGGIISLLNLLDVKTGSVQHNAAFALYGLADNEENVADFIKAGGIQKLQDDNFTVQPTRDCVVRTLKRLQNKIHGPVLNQLLYLMRTAEKTVQIRIALALAHLCDPKDGKLIFIDNNGVEFLLELLYFSSNKQQRYSSSALYELAKKATSFAPEDSAPCSPTQQVFLGEKFVNNPTMSDVTFLIDGKQFYAHKIGLVASSDIFRAMFDGLYKERNAQNVEIPNIRWEVFELMMKFIYSGRINIAKHLAKDLLVAADQYLLEGLKRQCEYTIAQEICLDNIPEMYELADTFNASALRRACTLFVLEHFTKLSSQLWFAKFVKQIIPEIRSYMTDILTRPVEASPPTVV.

ARM repeat units lie at residues 112–154 (DENV…KDCA), 165–212 (PGYQ…NIAH), 215–254 (PRIK…TVSF), 257–296 (DENK…NLVH), 299–338 (PDIK…QFAA), 341–380 (SDCK…RLAQ), 382–421 (AHNQ…GLAD), 456–495 (LKRL…HLCD), and 497–536 (KDGK…ELAK). The 68-residue stretch at 568 to 635 (SDVTFLIDGK…IYSGRINIAK (68 aa)) folds into the BTB domain.

Forms a heterodimeric complex with TCP24. Interacts with the origin recognition complex (preRC) components ORC1A, ORC1B, CDT1A and CDT1B. Interacts with DUF7/AIP1. In terms of tissue distribution, weakly expressed in the emerging lateral roots and mainly expressed in the shoot apex, young leaves and flower buds.

Its subcellular location is the nucleus. It participates in protein modification; protein ubiquitination. Functionally, may act as a substrate-specific adapter of an E3 ubiquitin-protein ligase complex (CUL3-RBX1-BTB) which mediates the ubiquitination and subsequent proteasomal degradation of target proteins. In association with TCP24, exerts a negative role in cell proliferation in leaves, possibly by inhibiting mitotic DNA replication. The protein is ARMADILLO BTB ARABIDOPSIS PROTEIN 1 (ABAP1) of Arabidopsis thaliana (Mouse-ear cress).